We begin with the raw amino-acid sequence, 141 residues long: MAPRDKRLSSTPLEILFFLNGWYYATYFLLELLIFLYKGLLLPYPTANLVLDVVMLLLYLGIEVIRLFFGTKGNLCQRKMPLGISVALTFPSAMMASYYLLLQTYVLRLEAIMNSILLFFCGSELLLEMLTLATFSSMDRI.

4 consecutive transmembrane segments (helical) span residues 15–35 (ILFFLNGWYYATYFLLELLIF), 49–69 (LVLDVVMLLLYLGIEVIRLFF), 82–102 (LGISVALTFPSAMMASYYLLL), and 115–135 (SILLFFCGSELLLEMLTLATF).

As to quaternary structure, part of the tectonic-like complex (also named B9 complex). Interacts with TMEM107.

Its subcellular location is the membrane. The protein resides in the cytoplasm. It localises to the cytoskeleton. The protein localises to the cilium basal body. In terms of biological role, part of the tectonic-like complex which is required for tissue-specific ciliogenesis and may regulate ciliary membrane composition. This is Transmembrane protein 216 (Tmem216) from Rattus norvegicus (Rat).